The following is a 404-amino-acid chain: tRNA pseudouridine synthase D (404 aa).

The active-site Nucleophile is the Asp-79. One can recognise a TRUD domain in the interval Gly-154–Val-364.

The protein belongs to the pseudouridine synthase TruD family.

The catalysed reaction is uridine(13) in tRNA = pseudouridine(13) in tRNA. Its function is as follows. Responsible for synthesis of pseudouridine from uracil-13 in transfer RNAs. This is tRNA pseudouridine synthase D from Geobacter metallireducens (strain ATCC 53774 / DSM 7210 / GS-15).